Here is a 146-residue protein sequence, read N- to C-terminus: Meiotically up-regulated gene 96 protein (146 aa).

Residues 85 to 104 traverse the membrane as a helical segment; sequence LIRYSLILTCLVAILLSVLW.

The protein resides in the cytoplasm. The protein localises to the membrane. Has a role in meiosis. This chain is Meiotically up-regulated gene 96 protein (mug96), found in Schizosaccharomyces pombe (strain 972 / ATCC 24843) (Fission yeast).